The sequence spans 710 residues: Integrator complex subunit 10 (710 aa).

3 positions are modified to phosphoserine: Ser-231, Ser-381, and Ser-382. Residue Lys-464 forms a Glycyl lysine isopeptide (Lys-Gly) (interchain with G-Cter in SUMO2) linkage.

Belongs to the Integrator subunit 10 family. As to quaternary structure, component of the Integrator complex, composed of core subunits INTS1, INTS2, INTS3, INTS4, INTS5, INTS6, INTS7, INTS8, INTS9/RC74, INTS10, INTS11/CPSF3L, INTS12, INTS13, INTS14 and INTS15. The core complex associates with protein phosphatase 2A subunits PPP2CA and PPP2R1A, to form the Integrator-PP2A (INTAC) complex. INTS10 is part of the tail subcomplex, composed of INTS10, INTS13, INTS14 and INTS15.

It is found in the nucleus. Functionally, component of the integrator complex, a multiprotein complex that terminates RNA polymerase II (Pol II) transcription in the promoter-proximal region of genes. The integrator complex provides a quality checkpoint during transcription elongation by driving premature transcription termination of transcripts that are unfavorably configured for transcriptional elongation: the complex terminates transcription by (1) catalyzing dephosphorylation of the C-terminal domain (CTD) of Pol II subunit POLR2A/RPB1 and SUPT5H/SPT5, (2) degrading the exiting nascent RNA transcript via endonuclease activity and (3) promoting the release of Pol II from bound DNA. The integrator complex is also involved in terminating the synthesis of non-coding Pol II transcripts, such as enhancer RNAs (eRNAs), small nuclear RNAs (snRNAs), telomerase RNAs and long non-coding RNAs (lncRNAs). Within the integrator complex, INTS10 is part of the integrator tail module that acts as a platform for the recruitment of transcription factors at promoters. May be not involved in the recruitment of cytoplasmic dynein to the nuclear envelope, probably as component of the integrator complex. This is Integrator complex subunit 10 from Homo sapiens (Human).